The sequence spans 2207 residues: Mediator of RNA polymerase II transcription subunit 13-like (2207 aa).

Residues 337–355 (VQSAASHLGSQDGGMSTMH) show a composition bias toward polar residues. 4 disordered regions span residues 337 to 368 (VQSA…PKLH), 384 to 403 (AQSK…AAHS), 431 to 479 (VGPS…KRPL), and 519 to 574 (KYDK…VPVN). Basic residues predominate over residues 356 to 368 (SPKRSRKTPPKLH). Over residues 384–394 (AQSKRSQMSTP) the composition is skewed to polar residues. The span at 442–453 (PGFSAGLPSSSS) shows a compositional bias: low complexity. Positions 463 to 475 (KTTERQEKGDKLQ) are enriched in basic and acidic residues. Residues 528–539 (SRNTSKQMNLNP) are compositionally biased toward polar residues. Residues 546–555 (PISPLPPTLS) show a composition bias toward pro residues. Serine 548 and serine 555 each carry phosphoserine. Positions 664 to 668 (LQRLL) match the LXXLL motif 1 motif. Residues 731 to 747 (GTEKDSLKKNKSEDGFG) show a composition bias toward basic and acidic residues. The tract at residues 731 to 767 (GTEKDSLKKNKSEDGFGTKDVTTPGHSTPVPDGKNAM) is disordered. Serine 812 and serine 821 each carry phosphoserine. The interval 816–847 (ELGAVSPALRSSKMPTVGTEERPPGKDGRAAG) is disordered. Positions 834-844 (TEERPPGKDGR) are enriched in basic and acidic residues. Phosphoserine is present on serine 918. The disordered stretch occupies residues 1004–1091 (DPDYVNTPQM…STTRPLNSVE (88 aa)). Over residues 1009 to 1019 (NTPQMNTPVTL) the composition is skewed to polar residues. Low complexity predominate over residues 1020 to 1031 (NSAAPASNSGAG). The span at 1072–1087 (TDQGSPASTPSTTRPL) shows a compositional bias: polar residues. An LXXLL motif 2 motif is present at residues 1224-1228 (LLLLL). The leucine-zipper stretch occupies residues 1379 to 1400 (LPIPTLLVGYDKEFLTISPFSL). Disordered regions lie at residues 1523 to 1652 (LMPP…SVTE) and 2042 to 2077 (GNLH…QGER). A compositionally biased stretch (low complexity) spans 1541 to 1593 (PGNAGSLPSNSGSGAPPAGSAFNPTSSSSANPTTSSSSASSGPPGSSAASAPG). 2 stretches are compositionally biased toward polar residues: residues 1612 to 1624 (QNPS…TDRT) and 1635 to 1649 (PGQS…GQDS). Serine 2080 is subject to Phosphoserine.

The protein belongs to the Mediator complex subunit 13 family. In terms of assembly, component of the Mediator complex, which is composed of MED1, MED4, MED6, MED7, MED8, MED9, MED10, MED11, MED12, MED13, MED13L, MED14, MED15, MED16, MED17, MED18, MED19, MED20, MED21, MED22, MED23, MED24, MED25, MED26, MED27, MED29, MED30, MED31, CCNC, CDK8 and CDC2L6/CDK11. The MED12, MED13, CCNC and CDK8 subunits form a distinct module termed the CDK8 module. Mediator containing the CDK8 module is less active than Mediator lacking this module in supporting transcriptional activation. Individual preparations of the Mediator complex lacking one or more distinct subunits have been variously termed ARC, CRSP, DRIP, PC2, SMCC and TRAP. In terms of tissue distribution, highly expressed in heart and weakly expressed in brain, spleen, lung, liver, kidney and testis.

It localises to the nucleus. Functionally, component of the Mediator complex, a coactivator involved in the regulated transcription of nearly all RNA polymerase II-dependent genes. Mediator functions as a bridge to convey information from gene-specific regulatory proteins to the basal RNA polymerase II transcription machinery. Mediator is recruited to promoters by direct interactions with regulatory proteins and serves as a scaffold for the assembly of a functional preinitiation complex with RNA polymerase II and the general transcription factors. This subunit may specifically regulate transcription of targets of the Wnt signaling pathway and SHH signaling pathway. In Mus musculus (Mouse), this protein is Mediator of RNA polymerase II transcription subunit 13-like (Med13l).